Here is a 439-residue protein sequence, read N- to C-terminus: UDP-N-acetylmuramate--L-alanine ligase (439 aa).

An ATP-binding site is contributed by 113–119 (GSHGKTS).

Belongs to the MurCDEF family.

The protein resides in the cytoplasm. It carries out the reaction UDP-N-acetyl-alpha-D-muramate + L-alanine + ATP = UDP-N-acetyl-alpha-D-muramoyl-L-alanine + ADP + phosphate + H(+). It functions in the pathway cell wall biogenesis; peptidoglycan biosynthesis. Its function is as follows. Cell wall formation. This chain is UDP-N-acetylmuramate--L-alanine ligase, found in Lactobacillus delbrueckii subsp. bulgaricus (strain ATCC 11842 / DSM 20081 / BCRC 10696 / JCM 1002 / NBRC 13953 / NCIMB 11778 / NCTC 12712 / WDCM 00102 / Lb 14).